A 431-amino-acid chain; its full sequence is 5-methylthioadenosine/S-adenosylhomocysteine deaminase (431 aa).

Zn(2+) is bound by residues His61 and His63. Substrate contacts are provided by Glu90 and His183. Zn(2+) is bound at residue His210. Residues Glu213 and Asp298 each contribute to the substrate site. Asp298 provides a ligand contact to Zn(2+).

It belongs to the metallo-dependent hydrolases superfamily. MTA/SAH deaminase family. The cofactor is Zn(2+).

The catalysed reaction is S-adenosyl-L-homocysteine + H2O + H(+) = S-inosyl-L-homocysteine + NH4(+). It catalyses the reaction S-methyl-5'-thioadenosine + H2O + H(+) = S-methyl-5'-thioinosine + NH4(+). In terms of biological role, catalyzes the deamination of 5-methylthioadenosine and S-adenosyl-L-homocysteine into 5-methylthioinosine and S-inosyl-L-homocysteine, respectively. Is also able to deaminate adenosine. The chain is 5-methylthioadenosine/S-adenosylhomocysteine deaminase from Halobacterium salinarum (strain ATCC 700922 / JCM 11081 / NRC-1) (Halobacterium halobium).